Reading from the N-terminus, the 216-residue chain is MNLILMGLPGAGKGTQAEQIVAKYNIPHISTGDMFRAAMKAETEMGLQAKSFIDKGALVPDEVTIGIVRERLSQEDCVRGFLLDGFPRTVAQASALEEIMKDLGKKIDYVLNINVDSGLLLKRLTGRRICKECGATYHLEFNPPAKADVCDKCGGELYQRSDDNEETVANRLDVNIKQTKPLLDFYEELGYLQSINGEQDINKVFADIDVLIGGLA.

10-15 lines the ATP pocket; that stretch reads GAGKGT. Positions 30 to 59 are NMP; it reads STGDMFRAAMKAETEMGLQAKSFIDKGALV. AMP-binding positions include threonine 31, arginine 36, 57–59, 85–88, and glutamine 92; these read ALV and GFPR. Positions 126–163 are LID; sequence GRRICKECGATYHLEFNPPAKADVCDKCGGELYQRSDD. An ATP-binding site is contributed by arginine 127. Residues cysteine 130 and cysteine 133 each coordinate Zn(2+). Residue 136–137 participates in ATP binding; it reads TY. Positions 150 and 153 each coordinate Zn(2+). AMP-binding residues include arginine 160 and arginine 171. Residue glutamine 199 participates in ATP binding.

Belongs to the adenylate kinase family. As to quaternary structure, monomer.

It localises to the cytoplasm. It carries out the reaction AMP + ATP = 2 ADP. Its pathway is purine metabolism; AMP biosynthesis via salvage pathway; AMP from ADP: step 1/1. Catalyzes the reversible transfer of the terminal phosphate group between ATP and AMP. Plays an important role in cellular energy homeostasis and in adenine nucleotide metabolism. The sequence is that of Adenylate kinase from Bacillus cereus (strain ATCC 10987 / NRS 248).